The sequence spans 465 residues: UDP-N-acetylmuramate--L-alanine ligase (465 aa).

ATP is bound at residue 112-118 (GTHGKTT).

This sequence belongs to the MurCDEF family.

The protein localises to the cytoplasm. It catalyses the reaction UDP-N-acetyl-alpha-D-muramate + L-alanine + ATP = UDP-N-acetyl-alpha-D-muramoyl-L-alanine + ADP + phosphate + H(+). It participates in cell wall biogenesis; peptidoglycan biosynthesis. Cell wall formation. The protein is UDP-N-acetylmuramate--L-alanine ligase of Burkholderia lata (strain ATCC 17760 / DSM 23089 / LMG 22485 / NCIMB 9086 / R18194 / 383).